The sequence spans 337 residues: RNA 3'-terminal phosphate cyclase (337 aa).

ATP is bound by residues glutamine 101 and 282–285 (HMSD). Histidine 306 serves as the catalytic Tele-AMP-histidine intermediate.

Belongs to the RNA 3'-terminal cyclase family. Type 1 subfamily.

It is found in the cytoplasm. The enzyme catalyses a 3'-end 3'-phospho-ribonucleotide-RNA + ATP = a 3'-end 2',3'-cyclophospho-ribonucleotide-RNA + AMP + diphosphate. Its function is as follows. Catalyzes the conversion of 3'-phosphate to a 2',3'-cyclic phosphodiester at the end of RNA. The mechanism of action of the enzyme occurs in 3 steps: (A) adenylation of the enzyme by ATP; (B) transfer of adenylate to an RNA-N3'P to produce RNA-N3'PP5'A; (C) and attack of the adjacent 2'-hydroxyl on the 3'-phosphorus in the diester linkage to produce the cyclic end product. The biological role of this enzyme is unknown but it is likely to function in some aspects of cellular RNA processing. The sequence is that of RNA 3'-terminal phosphate cyclase from Saccharolobus islandicus (strain L.S.2.15 / Lassen #1) (Sulfolobus islandicus).